The primary structure comprises 109 residues: Nucleoid-associated protein VS_0917 (109 aa).

Disordered regions lie at residues 1 to 22 and 88 to 109; these read MFGK…ERMQ and QKEK…KMPF. Low complexity predominate over residues 9–18; sequence NMMKQAQQMQ.

The protein belongs to the YbaB/EbfC family. Homodimer.

The protein localises to the cytoplasm. Its subcellular location is the nucleoid. Its function is as follows. Binds to DNA and alters its conformation. May be involved in regulation of gene expression, nucleoid organization and DNA protection. The chain is Nucleoid-associated protein VS_0917 from Vibrio atlanticus (strain LGP32) (Vibrio splendidus (strain Mel32)).